Here is a 396-residue protein sequence, read N- to C-terminus: Lipid-A-disaccharide synthase (396 aa).

The protein belongs to the LpxB family.

The enzyme catalyses a lipid X + a UDP-2-N,3-O-bis[(3R)-3-hydroxyacyl]-alpha-D-glucosamine = a lipid A disaccharide + UDP + H(+). Its pathway is bacterial outer membrane biogenesis; LPS lipid A biosynthesis. In terms of biological role, condensation of UDP-2,3-diacylglucosamine and 2,3-diacylglucosamine-1-phosphate to form lipid A disaccharide, a precursor of lipid A, a phosphorylated glycolipid that anchors the lipopolysaccharide to the outer membrane of the cell. This is Lipid-A-disaccharide synthase from Nitrobacter hamburgensis (strain DSM 10229 / NCIMB 13809 / X14).